A 192-amino-acid polypeptide reads, in one-letter code: Adenylate kinase (192 aa).

Gly12–Thr17 lines the ATP pocket. The segment at Ser34–Val63 is NMP. Residues Thr35, Arg40, Asn61–Val63, Gly88–Arg91, and Gln95 each bind AMP. An LID region spans residues Gly130–Asp136. Residue Arg131 coordinates ATP. AMP contacts are provided by Arg133 and Arg145. ATP is bound at residue Arg173.

This sequence belongs to the adenylate kinase family. Monomer.

The protein localises to the cytoplasm. The enzyme catalyses AMP + ATP = 2 ADP. It functions in the pathway purine metabolism; AMP biosynthesis via salvage pathway; AMP from ADP: step 1/1. In terms of biological role, catalyzes the reversible transfer of the terminal phosphate group between ATP and AMP. Plays an important role in cellular energy homeostasis and in adenine nucleotide metabolism. This chain is Adenylate kinase, found in Campylobacter jejuni (strain RM1221).